Consider the following 233-residue polypeptide: Small ribosomal subunit protein uS5 (233 aa).

A compositionally biased stretch (polar residues) spans 1-13 (MAEETQNTVATES). The interval 1-40 (MAEETQNTVATESNNEDRKGRRGQRGEGRRGERRNRREEN) is disordered. A compositionally biased stretch (basic and acidic residues) spans 15–40 (NEDRKGRRGQRGEGRRGERRNRREEN). The 64-residue stretch at 45–108 (LLDRVVTINR…LDAKKHMFSV (64 aa)) folds into the S5 DRBM domain.

The protein belongs to the universal ribosomal protein uS5 family. Part of the 30S ribosomal subunit. Contacts proteins S4 and S8.

Its function is as follows. With S4 and S12 plays an important role in translational accuracy. In terms of biological role, located at the back of the 30S subunit body where it stabilizes the conformation of the head with respect to the body. The protein is Small ribosomal subunit protein uS5 of Bifidobacterium longum (strain NCC 2705).